A 134-amino-acid chain; its full sequence is Histone H2B (134 aa).

Positions Met-1–Lys-10 are enriched in polar residues. 2 disordered regions span residues Met-1–Lys-29 and Val-113–Arg-134. The segment covering Ala-12 to Lys-29 has biased composition (basic and acidic residues). Residues Gly-125–Arg-134 show a composition bias toward polar residues.

This sequence belongs to the histone H2B family. In terms of assembly, the nucleosome is a histone octamer containing two molecules each of H2A, H2B, H3 and H4 assembled in one H3-H4 heterotetramer and two H2A-H2B heterodimers. The octamer wraps approximately 147 bp of DNA.

It is found in the nucleus. Its subcellular location is the chromosome. Core component of nucleosome. Nucleosomes wrap and compact DNA into chromatin, limiting DNA accessibility to the cellular machineries which require DNA as a template. Histones thereby play a central role in transcription regulation, DNA repair, DNA replication and chromosomal stability. DNA accessibility is regulated via a complex set of post-translational modifications of histones, also called histone code, and nucleosome remodeling. In Entamoeba invadens, this protein is Histone H2B.